Here is a 149-residue protein sequence, read N- to C-terminus: SsrA-binding protein (149 aa).

Belongs to the SmpB family.

It localises to the cytoplasm. Required for rescue of stalled ribosomes mediated by trans-translation. Binds to transfer-messenger RNA (tmRNA), required for stable association of tmRNA with ribosomes. tmRNA and SmpB together mimic tRNA shape, replacing the anticodon stem-loop with SmpB. tmRNA is encoded by the ssrA gene; the 2 termini fold to resemble tRNA(Ala) and it encodes a 'tag peptide', a short internal open reading frame. During trans-translation Ala-aminoacylated tmRNA acts like a tRNA, entering the A-site of stalled ribosomes, displacing the stalled mRNA. The ribosome then switches to translate the ORF on the tmRNA; the nascent peptide is terminated with the 'tag peptide' encoded by the tmRNA and targeted for degradation. The ribosome is freed to recommence translation, which seems to be the essential function of trans-translation. In Wolbachia pipientis wMel, this protein is SsrA-binding protein.